A 571-amino-acid chain; its full sequence is Dual specificity testis-specific protein kinase 2 (571 aa).

The Protein kinase domain maps to 58 to 313 (DFTCEKIGSG…EIGKTLEEIL (256 aa)). ATP is bound by residues 64-72 (IGSGFFSEV) and lysine 87. Aspartate 176 serves as the catalytic Proton acceptor. Position 219 is a phosphoserine; by autocatalysis (serine 219). A phosphoserine mark is found at serine 369, serine 456, and serine 460. The disordered stretch occupies residues 521 to 571 (ENGFGSRPQGTSPCPAGASEEMEVEERPAGSTPATFSTSGIGLQTQGKQDG). The segment covering 552–571 (TPATFSTSGIGLQTQGKQDG) has biased composition (polar residues).

Belongs to the protein kinase superfamily. TKL Ser/Thr protein kinase family. The cofactor is Mg(2+). Mn(2+) serves as cofactor. Predominantly expressed in testis and prostate. Found predominantly in non-germinal Sertoli cells.

Its subcellular location is the nucleus. It carries out the reaction L-seryl-[protein] + ATP = O-phospho-L-seryl-[protein] + ADP + H(+). The enzyme catalyses L-threonyl-[protein] + ATP = O-phospho-L-threonyl-[protein] + ADP + H(+). The catalysed reaction is L-tyrosyl-[protein] + ATP = O-phospho-L-tyrosyl-[protein] + ADP + H(+). Activated by autophosphorylation on Ser-219. Dual specificity protein kinase activity catalyzing autophosphorylation and phosphorylation of exogenous substrates on both serine/threonine and tyrosine residues. Phosphorylates cofilin at 'Ser-3'. May play an important role in spermatogenesis. The polypeptide is Dual specificity testis-specific protein kinase 2 (TESK2) (Homo sapiens (Human)).